Reading from the N-terminus, the 143-residue chain is Flagellar assembly factor FliW (143 aa).

This sequence belongs to the FliW family. In terms of assembly, interacts with translational regulator CsrA and flagellin(s).

It is found in the cytoplasm. Acts as an anti-CsrA protein, binds CsrA and prevents it from repressing translation of its target genes, one of which is flagellin. Binds to flagellin and participates in the assembly of the flagellum. This chain is Flagellar assembly factor FliW, found in Bacillus velezensis (strain DSM 23117 / BGSC 10A6 / LMG 26770 / FZB42) (Bacillus amyloliquefaciens subsp. plantarum).